A 297-amino-acid polypeptide reads, in one-letter code: Phosphatidylinositol N-acetylglucosaminyltransferase subunit C (297 aa).

8 helical membrane-spanning segments follow: residues 51–71, 80–100, 117–137, 153–173, 174–194, 196–216, 227–244, and 250–270; these read VVFESSVVIQQLCSVCVFVVI, LAPHWLLGTGLASSLIGYVLF, WADLKSALVFITFTYGFSPVL, SVFMLLGHLIFFDYGANAAIV, SSTLSLNMAIFASVCLASRLP, SLHAFIMVTFAIQIFALWPML, SYVGVTLLFAFSAVGGLL, and GAVLFALLLMSISCLCPFYLI.

The protein belongs to the PIGC family. Component of the glycosylphosphatidylinositol-N-acetylglucosaminyltransferase (GPI-GnT) complex composed at least by PIGA, PIGC, PIGH, PIGP, PIGQ, PIGY and DPM2. Interacts with PIGQ. Interacts with the heterodimer PIGA:PIGH.

Its subcellular location is the endoplasmic reticulum membrane. Its pathway is glycolipid biosynthesis; glycosylphosphatidylinositol-anchor biosynthesis. Its function is as follows. Part of the glycosylphosphatidylinositol-N-acetylglucosaminyltransferase (GPI-GnT) complex that catalyzes the transfer of N-acetylglucosamine from UDP-N-acetylglucosamine to phosphatidylinositol and participates in the first step of GPI biosynthesis. This Homo sapiens (Human) protein is Phosphatidylinositol N-acetylglucosaminyltransferase subunit C.